The sequence spans 202 residues: Thymidylate kinase (202 aa).

An ATP-binding site is contributed by 7–14 (GIDGSGKT).

The protein belongs to the thymidylate kinase family.

The catalysed reaction is dTMP + ATP = dTDP + ADP. Phosphorylation of dTMP to form dTDP in both de novo and salvage pathways of dTTP synthesis. The chain is Thymidylate kinase from Ehrlichia ruminantium (strain Gardel).